The sequence spans 284 residues: MTNKVVKIGDIPVANDLPFVLFGGMNVLESRDLAMRICEHYVTITQKLSIPYVFKASFDKANRSSIHSYRGPGLEEGMKIFQELKQTFGVKIITDVHEAHQAQPVADVVDVIQLPAFLARQTDLVEAMAKTGAVINVKKPQFVSPGQMGNIVDKFIEGGNDQVILCDRGSNFGYDNLVVDMLGFNVMKQVSKGSPVIFDVTHALQCRDPFGAASSGRRGQVTELARAGMAVGLAGLFIEAHPDPANAKCDGPSALPLDKLEPFLQQIKAIDDLVKNFPELDTSK.

The protein belongs to the KdsA family.

The protein resides in the cytoplasm. The enzyme catalyses D-arabinose 5-phosphate + phosphoenolpyruvate + H2O = 3-deoxy-alpha-D-manno-2-octulosonate-8-phosphate + phosphate. It participates in carbohydrate biosynthesis; 3-deoxy-D-manno-octulosonate biosynthesis; 3-deoxy-D-manno-octulosonate from D-ribulose 5-phosphate: step 2/3. Its pathway is bacterial outer membrane biogenesis; lipopolysaccharide biosynthesis. This chain is 2-dehydro-3-deoxyphosphooctonate aldolase, found in Pectobacterium carotovorum subsp. carotovorum (strain PC1).